Here is a 657-residue protein sequence, read N- to C-terminus: DNA mismatch repair protein MutL (657 aa).

This sequence belongs to the DNA mismatch repair MutL/HexB family.

Functionally, this protein is involved in the repair of mismatches in DNA. It is required for dam-dependent methyl-directed DNA mismatch repair. May act as a 'molecular matchmaker', a protein that promotes the formation of a stable complex between two or more DNA-binding proteins in an ATP-dependent manner without itself being part of a final effector complex. In Streptococcus agalactiae serotype Ia (strain ATCC 27591 / A909 / CDC SS700), this protein is DNA mismatch repair protein MutL.